We begin with the raw amino-acid sequence, 59 residues long: Large ribosomal subunit protein uL30 (59 aa).

The protein belongs to the universal ribosomal protein uL30 family. In terms of assembly, part of the 50S ribosomal subunit.

This is Large ribosomal subunit protein uL30 from Photobacterium profundum (strain SS9).